A 485-amino-acid polypeptide reads, in one-letter code: Threonine synthase-like 2 (485 aa).

Lys113 bears the N6-(pyridoxal phosphate)lysine mark.

The protein belongs to the threonine synthase family. Requires pyridoxal 5'-phosphate as cofactor.

In terms of biological role, acts as a catabolic phospho-lyase on both gamma- and beta-phosphorylated substrates. Degrades O-phospho-threonine (PThr) to alpha-ketobutyrate, ammonia and phosphate. This is Threonine synthase-like 2 (Thnsl2) from Rattus norvegicus (Rat).